The following is a 58-amino-acid chain: UPF0391 membrane protein Shew185_1413 (58 aa).

2 consecutive transmembrane segments (helical) span residues 6–26 and 28–48; these read LVFLVVAVIAGLFGFTGIAGA and AGIAKIIFFLFIVLLVISLLI.

It belongs to the UPF0391 family.

It is found in the cell membrane. This chain is UPF0391 membrane protein Shew185_1413, found in Shewanella baltica (strain OS185).